The following is a 174-amino-acid chain: Adenylate kinase (174 aa).

The tract at residues 12–41 (STGDMLRAAIKAGTLLGLEAKKIIDEGGLV) is NMP. AMP-binding positions include threonine 13, arginine 18, 39-41 (GLV), 67-70 (GFPR), and glutamine 74. Positions 104 to 141 (GRRVHLASGRTYHVTYNPPKVEGKDDVTGEDLIQRDDD) are LID. ATP contacts are provided by residues arginine 105 and 114 to 115 (TY). Residues arginine 138 and arginine 149 each coordinate AMP.

Belongs to the adenylate kinase family. Monomer.

The protein localises to the cytoplasm. It catalyses the reaction AMP + ATP = 2 ADP. The protein operates within purine metabolism; AMP biosynthesis via salvage pathway; AMP from ADP: step 1/1. In terms of biological role, catalyzes the reversible transfer of the terminal phosphate group between ATP and AMP. Plays an important role in cellular energy homeostasis and in adenine nucleotide metabolism. The sequence is that of Adenylate kinase from Neisseria polysaccharea.